Consider the following 260-residue polypeptide: Phosphatidate cytidylyltransferase (260 aa).

Transmembrane regions (helical) follow at residues 9-29 (IIAL…LMLF), 46-66 (MIKF…IIML), 70-90 (AGSW…FILL), 102-122 (FMDA…FMYL), 130-150 (LHYI…AYIF), 172-192 (FVGG…FVDF), and 196-216 (LWLL…GDLV).

Belongs to the CDS family.

The protein localises to the cell membrane. It catalyses the reaction a 1,2-diacyl-sn-glycero-3-phosphate + CTP + H(+) = a CDP-1,2-diacyl-sn-glycerol + diphosphate. It participates in phospholipid metabolism; CDP-diacylglycerol biosynthesis; CDP-diacylglycerol from sn-glycerol 3-phosphate: step 3/3. The protein is Phosphatidate cytidylyltransferase (cdsA) of Staphylococcus saprophyticus subsp. saprophyticus (strain ATCC 15305 / DSM 20229 / NCIMB 8711 / NCTC 7292 / S-41).